The following is a 224-amino-acid chain: IAP-like protein p27 (224 aa).

One copy of the BIR repeat lies at 29 to 92 (VDARNQSFAI…GFWSRNCGFM (64 aa)). Zn(2+) is bound by residues Cys-62, Cys-65, His-82, and Cys-89.

Not essential for growth or virulence. Does not have antiapoptotic function. This is IAP-like protein p27 (p27) from Ornithodoros (relapsing fever ticks).